A 212-amino-acid polypeptide reads, in one-letter code: Probable nicotinate-nucleotide adenylyltransferase (212 aa).

The protein belongs to the NadD family.

The catalysed reaction is nicotinate beta-D-ribonucleotide + ATP + H(+) = deamido-NAD(+) + diphosphate. The protein operates within cofactor biosynthesis; NAD(+) biosynthesis; deamido-NAD(+) from nicotinate D-ribonucleotide: step 1/1. In terms of biological role, catalyzes the reversible adenylation of nicotinate mononucleotide (NaMN) to nicotinic acid adenine dinucleotide (NaAD). The protein is Probable nicotinate-nucleotide adenylyltransferase of Shewanella sp. (strain MR-4).